The sequence spans 445 residues: Phenylacetate-coenzyme A ligase (445 aa).

This sequence belongs to the phenylacetyl-CoA ligase family. As to quaternary structure, monomer.

The enzyme catalyses 2-phenylacetate + ATP + CoA = phenylacetyl-CoA + AMP + diphosphate. Its pathway is aromatic compound metabolism; phenylacetate degradation. In terms of biological role, catalyzes the activation of phenylacetic acid (PA) to phenylacetyl-CoA (PA-CoA). Involved in the phenylalanine metabolism. The sequence is that of Phenylacetate-coenzyme A ligase from Thermus thermophilus (strain ATCC BAA-163 / DSM 7039 / HB27).